The following is a 74-amino-acid chain: Large ribosomal subunit protein bL31 (74 aa).

This sequence belongs to the bacterial ribosomal protein bL31 family. Type A subfamily. Part of the 50S ribosomal subunit.

Binds the 23S rRNA. The chain is Large ribosomal subunit protein bL31 from Synechococcus sp. (strain JA-2-3B'a(2-13)) (Cyanobacteria bacterium Yellowstone B-Prime).